The primary structure comprises 425 residues: Histidinol dehydrogenase (425 aa).

Tyrosine 124, glutamine 184, and asparagine 207 together coordinate NAD(+). Positions 230, 252, and 255 each coordinate substrate. Zn(2+) contacts are provided by glutamine 252 and histidine 255. Residues glutamate 321 and histidine 322 each act as proton acceptor in the active site. Histidine 322, aspartate 355, glutamate 409, and histidine 414 together coordinate substrate. Residue aspartate 355 participates in Zn(2+) binding. Histidine 414 is a Zn(2+) binding site.

Belongs to the histidinol dehydrogenase family. It depends on Zn(2+) as a cofactor.

It carries out the reaction L-histidinol + 2 NAD(+) + H2O = L-histidine + 2 NADH + 3 H(+). It participates in amino-acid biosynthesis; L-histidine biosynthesis; L-histidine from 5-phospho-alpha-D-ribose 1-diphosphate: step 9/9. Its function is as follows. Catalyzes the sequential NAD-dependent oxidations of L-histidinol to L-histidinaldehyde and then to L-histidine. The polypeptide is Histidinol dehydrogenase (Halobacterium salinarum (strain ATCC 700922 / JCM 11081 / NRC-1) (Halobacterium halobium)).